Reading from the N-terminus, the 842-residue chain is Phosphatidylethanolamine N-methyltransferase (842 aa).

Residues 1–28 (MIKERKPSKSRAPGKGHKQIPGVAKESQ) are disordered. Residues 1 to 60 (MIKERKPSKSRAPGKGHKQIPGVAKESQPIARTRTGNVEFTPAKTHDMVRSLFDPTLKKS) lie on the Lumenal side of the membrane. The segment covering 8 to 18 (SKSRAPGKGHK) has biased composition (basic residues). Residues 61–81 (FLECWISLAILSNVVLCYFMA) form a helical membrane-spanning segment. Topologically, residues 82–91 (TKFGASFTKK) are cytoplasmic. A helical membrane pass occupies residues 92–112 (FFLWQYVFWRLCYNVGIGVVL). The Lumenal segment spans residues 113 to 172 (HFQSNYETLTNFAKMRSLFSKKNQQWLARFCRFEIESKMPNTYCLEEYPEEFNVWLLFRQ). The helical transmembrane segment at 173–193 (FVDLILMQDFTTYILFVVLSI) threads the bilayer. Over 194 to 196 (PKT) the chain is Cytoplasmic. Residues 197-217 (VLSSHTVSFALGVIMILFNVW) traverse the membrane as a helical segment. Over 218 to 243 (VKVDAHRVVKDYAWYWGDFFFFQDSK) the chain is Lumenal. A helical transmembrane segment spans residues 244 to 264 (LVFDGVFNVSPHPMYSIGYMG). Topologically, residues 265 to 270 (YYGLSL) are cytoplasmic. A helical membrane pass occupies residues 271-291 (ISGDYKVLLVSIGGHLLQFLF). The Lumenal portion of the chain corresponds to 292 to 345 (LKYCENPHIEKIYGSDAVENDNAHIDELLVKENPNYSKPLITKGLWFTNVDKLR). The helical transmembrane segment at 346-366 (LTDYFTILTVASIVLFTFFLK) threads the bilayer. The Cytoplasmic portion of the chain corresponds to 367 to 370 (PSTK). Residues 371–391 (ALFWATLVAKITTSLFISLVL) traverse the membrane as a helical segment. The Lumenal portion of the chain corresponds to 392–414 (HKQSTSKWFTRLFLKNGYTQVHS). The chain crosses the membrane as a helical span at residues 415–435 (FYQWQFLYNYCLTVSYTLLIL). At 436–468 (QTWSQFRHLESRNYTQIIFGFLLCWLQKWCDDE) the chain is on the cytoplasmic side. The helical transmembrane segment at 469-489 (ILTAISEFGWFYGDFFLTNYI) threads the bilayer. At 490–514 (SSRKLNSRGIYRYLSNPERFLGVAG) the chain is on the lumenal side. A helical transmembrane segment spans residues 515-535 (CWGAVLITHFSPYNLILAALW). At 536–842 (TAANIALVKL…EIKAVLENLE (307 aa)) the chain is on the cytoplasmic side.

This sequence belongs to the class VI-like SAM-binding methyltransferase superfamily. CHO2 family.

It localises to the endoplasmic reticulum membrane. It catalyses the reaction a 1,2-diacyl-sn-glycero-3-phosphoethanolamine + S-adenosyl-L-methionine = a 1,2-diacyl-sn-glycero-3-phospho-N-methylethanolamine + S-adenosyl-L-homocysteine + H(+). The protein operates within phospholipid metabolism; phosphatidylcholine biosynthesis. In terms of biological role, catalyzes the first step of the methylation pathway of phosphatidylcholine biosynthesis, the SAM-dependent methylation of phosphatidylethanolamine (PE) to phosphatidylmonomethylethanolamine (PMME). This Lachancea thermotolerans (strain ATCC 56472 / CBS 6340 / NRRL Y-8284) (Yeast) protein is Phosphatidylethanolamine N-methyltransferase (CHO2).